Here is a 218-residue protein sequence, read N- to C-terminus: 1-Cys peroxiredoxin PER1 (218 aa).

A Thioredoxin domain is found at 4–164; the sequence is LTIGDTVPNL…VVRAVDSLLT (161 aa). Residue cysteine 46 is the Cysteine sulfenic acid (-SOH) intermediate of the active site. The Bipartite nuclear localization signal motif lies at 194–217; the sequence is KKMFPQGFETADLPSKKGYLRFTK.

Belongs to the peroxiredoxin family. Prx6 subfamily.

The protein localises to the nucleus. It is found in the cytoplasm. The catalysed reaction is a hydroperoxide + [thioredoxin]-dithiol = an alcohol + [thioredoxin]-disulfide + H2O. Its function is as follows. Thiol-specific peroxidase that catalyzes the reduction of hydrogen peroxide and organic hydroperoxides to water and alcohols, respectively. Seems to contribute to the inhibition of germination during stress. The chain is 1-Cys peroxiredoxin PER1 (PER1) from Triticum aestivum (Wheat).